The chain runs to 247 residues: Uridylate kinase (247 aa).

15-18 (KLSG) contributes to the ATP binding site. The segment at 23 to 28 (GDEGFG) is involved in allosteric activation by GTP. UMP is bound at residue glycine 57. ATP contacts are provided by glycine 58 and arginine 62. UMP-binding positions include aspartate 77 and 138–145 (TGNPFFTT). Residues threonine 165, tyrosine 171, and aspartate 174 each contribute to the ATP site.

The protein belongs to the UMP kinase family. Homohexamer.

It is found in the cytoplasm. It catalyses the reaction UMP + ATP = UDP + ADP. It participates in pyrimidine metabolism; CTP biosynthesis via de novo pathway; UDP from UMP (UMPK route): step 1/1. Allosterically activated by GTP. Inhibited by UTP. Catalyzes the reversible phosphorylation of UMP to UDP. This chain is Uridylate kinase, found in Colwellia psychrerythraea (strain 34H / ATCC BAA-681) (Vibrio psychroerythus).